The primary structure comprises 309 residues: Glutaminase (309 aa).

Substrate-binding residues include serine 64, asparagine 114, glutamate 160, asparagine 167, tyrosine 191, tyrosine 243, and valine 261.

It belongs to the glutaminase family. As to quaternary structure, homotetramer.

It carries out the reaction L-glutamine + H2O = L-glutamate + NH4(+). In Rhizobium etli (strain CIAT 652), this protein is Glutaminase.